Consider the following 3034-residue polypeptide: Cadherin EGF LAG seven-pass G-type receptor 1 (3034 aa).

A signal peptide spans 1–29 (MAPSSPRVLPALVLLAAAALPALELGAAA). At 30 to 2484 (WELRVPGGAR…REHGEVLPLK (2455 aa)) the chain is on the extracellular side. Low complexity predominate over residues 222–243 (GTPSESPSVSPSLLNLSQPRAG). The disordered stretch occupies residues 222–267 (GTPSESPSVSPSLLNLSQPRAGVVRRSRRGTGSSTSPQFPLPSYQV). A glycan (N-linked (GlcNAc...) asparagine) is linked at Asn-236. Cadherin domains lie at 261–368 (PLPS…SPVF), 369–474 (EQSE…YPQF), 475–580 (SEKR…APIF), 581–702 (VSSP…DPMF), 703–804 (TQPV…RPVF), 805–907 (QSSH…APRF), 908–1014 (LRDF…PPVF), 1015–1116 (EKDE…PPEL), and 1121–1239 (ILFN…SPLL). N-linked (GlcNAc...) asparagine glycosylation is found at Asn-561, Asn-649, and Asn-793. N-linked (GlcNAc...) asparagine glycans are attached at residues Asn-1129, Asn-1154, Asn-1228, Asn-1264, Asn-1274, and Asn-1302. The EGF-like 1; calcium-binding domain maps to 1318–1376 (DDNICLREPCENYMKCVSVLRFDSSAPFISSTTVLFRPIHPITGLRCRCPPGFTGDYCE). 9 disulfide bridges follow: Cys-1322/Cys-1333, Cys-1327/Cys-1364, Cys-1366/Cys-1375, Cys-1382/Cys-1393, Cys-1387/Cys-1402, Cys-1404/Cys-1413, Cys-1422/Cys-1433, Cys-1427/Cys-1443, and Cys-1445/Cys-1455. Positions 1378–1414 (EIDLCYSNPCGANGRCRSREGGYTCECFEDFTGEHCQ) constitute an EGF-like 2; calcium-binding domain. Residues 1418 to 1456 (RSGRCASGVCKNGGTCVNLLIGGFHCVCPPGEYEHPYCE) form the EGF-like 3; calcium-binding domain. Positions 1457–1661 (VSTRSFPPQS…IANNGTRAGC (205 aa)) constitute a Laminin G-like 1 domain. Asn-1591, Asn-1638, and Asn-1655 each carry an N-linked (GlcNAc...) asparagine glycan. 13 disulfides stabilise this stretch: Cys-1635-Cys-1661, Cys-1668-Cys-1679, Cys-1673-Cys-1688, Cys-1690-Cys-1699, Cys-1855-Cys-1885, Cys-1891-Cys-1902, Cys-1896-Cys-1911, Cys-1913-Cys-1922, Cys-1926-Cys-1937, Cys-1931-Cys-1949, Cys-1951-Cys-1960, Cys-1968-Cys-1981, and Cys-1983-Cys-1993. In terms of domain architecture, EGF-like 4; calcium-binding spans 1664-1700 (QRNFCDGTSCQNGGTCVNRWNTYLCECPLRFGGKNCE). Asn-1681 carries the (3R)-3-hydroxyasparagine modification. One can recognise a Laminin G-like 2 domain in the interval 1704-1885 (PHPQRFTGES…ALKVRVKDGC (182 aa)). Positions 1887-1922 (VEDPCASSPCPPHSHCRDTWDSYSCICDRGYFGKKC) constitute an EGF-like 5; calcium-binding domain. Asp-1904 carries the post-translational modification (3R)-3-hydroxyaspartate. One can recognise an EGF-like 6; calcium-binding domain in the interval 1923-1961 (VDACLLNPCKHVAACVRSPNTPRGYSCECGPGHYGQYCE). An EGF-like 7; calcium-binding domain is found at 1962 to 1994 (NKVDLPCPKGWWGNPVCGPCHCAVSQGFDPDCN). N-linked (GlcNAc...) asparagine glycosylation occurs at Asn-1994. The region spanning 1996 to 2031 (TNGQCQCKENYYKPPAQDACLPCDCFPHGSHSRACD) is the EGF-like 8; calcium-binding domain. 5 cysteine pairs are disulfide-bonded: Cys-2000-Cys-2015, Cys-2002-Cys-2018, Cys-2020-Cys-2030, Cys-2039-Cys-2048, and Cys-2051-Cys-2063. One can recognise a Laminin EGF-like domain in the interval 2018-2065 (CDCFPHGSHSRACDMDTGQCACKPGVIGRQCNRCDNPFAEVTSLGCEV). N-linked (GlcNAc...) asparagine glycosylation is found at Asn-2118, Asn-2137, Asn-2144, Asn-2155, Asn-2160, and Asn-2272. Residues 2295-2346 (SVSFPADTFKPPEKKEGPVVRLTNRRTTPLTAQPEPRAERETSSSRRRRHPD) are disordered. In terms of domain architecture, GAIN-B spans 2312-2476 (PVVRLTNRRT…AVLMDISRRE (165 aa)). 2 disulfide bridges follow: Cys-2426–Cys-2458 and Cys-2446–Cys-2460. The GPS stretch occupies residues 2426 to 2476 (CVFWNHSLDTGGTGGWSAKGCELLSRNRTHVTCQCSHSASCAVLMDISRRE). N-linked (GlcNAc...) asparagine glycans are attached at residues Asn-2430 and Asn-2452. A helical transmembrane segment spans residues 2485–2505 (IITYAALSLSLVALLVAFVLL). Over 2506-2516 (SLVRTLRSNLH) the chain is Cytoplasmic. Residues 2517–2537 (SIHKNLITALFFSQLIFMVGI) form a helical membrane-spanning segment. The N-linked (GlcNAc...) asparagine glycan is linked to Asn-2538. Over 2538 to 2542 (NQTEN) the chain is Extracellular. The helical transmembrane segment at 2543–2563 (PFLCTVVAILLHYVSMGTFAW) threads the bilayer. Residues 2564–2587 (TLVENLHVYRMLTEVRNIDTGPMR) lie on the Cytoplasmic side of the membrane. A helical membrane pass occupies residues 2588–2608 (FYHVVGWGIPAIVTGLAVGLD). At 2609–2625 (PQGYGNPDFCWLSLQDT) the chain is on the extracellular side. The chain crosses the membrane as a helical span at residues 2626–2646 (LIWSFAGPVGTVIIINTVIFV). The Cytoplasmic portion of the chain corresponds to 2647-2670 (LSAKVSCQRKHHYYERKGVVSMLR). The helical transmembrane segment at 2671 to 2691 (TAFLLLLLVTATWLLGLLAVN) threads the bilayer. Over 2692 to 2694 (SDT) the chain is Extracellular. Residues 2695–2715 (LSFHYLFAAFSCLQGIFVLLF) traverse the membrane as a helical segment. The Cytoplasmic portion of the chain corresponds to 2716 to 3034 (HCVAHREVRK…QANGSDSEKP (319 aa)). The disordered stretch occupies residues 2774–3034 (TASLDSTTRD…QANGSDSEKP (261 aa)). Phosphoserine is present on residues Ser-2776, Ser-2779, Ser-2886, and Ser-2888. The span at 2893–2909 (TEPHLKVETKVSVELHR) shows a compositional bias: basic and acidic residues. The span at 2976–2986 (SPTSSRTSSLG) shows a compositional bias: low complexity. Positions 3003 to 3012 (PRREPGREHL) are enriched in basic and acidic residues. The segment covering 3020 to 3034 (RTGSAQANGSDSEKP) has biased composition (polar residues).

It belongs to the G-protein coupled receptor 2 family. LN-TM7 subfamily. In terms of processing, the iron and 2-oxoglutarate dependent 3-hydroxylation of aspartate and asparagine is (R) stereospecific within EGF domains. Expressed in the brain, where it is localized principally in the ependymal cell layer, choroid plexus and the area postrema. Also found in spinal cord and in the eye.

It is found in the cell membrane. Functionally, receptor that may have an important role in cell/cell signaling during nervous system formation. The protein is Cadherin EGF LAG seven-pass G-type receptor 1 (Celsr1) of Mus musculus (Mouse).